Consider the following 457-residue polypeptide: Bifunctional protein GlmU (457 aa).

The segment at 1–229 (MYNCAIILAA…YEEIMGVNSR (229 aa)) is pyrophosphorylase. Residues 8–11 (LAAG), K22, Q73, and 78–79 (GT) contribute to the UDP-N-acetyl-alpha-D-glucosamine site. A Mg(2+)-binding site is contributed by D103. UDP-N-acetyl-alpha-D-glucosamine is bound by residues G140, E155, N170, and N227. N227 contacts Mg(2+). The segment at 230–250 (VQLSEAEIVMRKRINHKHMVN) is linker. Residues 251-457 (GVTFIDCEST…WLDKKGLLKK (207 aa)) form an N-acetyltransferase region. UDP-N-acetyl-alpha-D-glucosamine-binding residues include R332 and K350. H362 (proton acceptor) is an active-site residue. UDP-N-acetyl-alpha-D-glucosamine-binding residues include Y365 and N376. Residues 385–386 (NY), A422, and R439 each bind acetyl-CoA.

In the N-terminal section; belongs to the N-acetylglucosamine-1-phosphate uridyltransferase family. This sequence in the C-terminal section; belongs to the transferase hexapeptide repeat family. As to quaternary structure, homotrimer. Mg(2+) serves as cofactor.

It is found in the cytoplasm. It catalyses the reaction alpha-D-glucosamine 1-phosphate + acetyl-CoA = N-acetyl-alpha-D-glucosamine 1-phosphate + CoA + H(+). The catalysed reaction is N-acetyl-alpha-D-glucosamine 1-phosphate + UTP + H(+) = UDP-N-acetyl-alpha-D-glucosamine + diphosphate. It functions in the pathway nucleotide-sugar biosynthesis; UDP-N-acetyl-alpha-D-glucosamine biosynthesis; N-acetyl-alpha-D-glucosamine 1-phosphate from alpha-D-glucosamine 6-phosphate (route II): step 2/2. It participates in nucleotide-sugar biosynthesis; UDP-N-acetyl-alpha-D-glucosamine biosynthesis; UDP-N-acetyl-alpha-D-glucosamine from N-acetyl-alpha-D-glucosamine 1-phosphate: step 1/1. Its pathway is bacterial outer membrane biogenesis; LPS lipid A biosynthesis. Functionally, catalyzes the last two sequential reactions in the de novo biosynthetic pathway for UDP-N-acetylglucosamine (UDP-GlcNAc). The C-terminal domain catalyzes the transfer of acetyl group from acetyl coenzyme A to glucosamine-1-phosphate (GlcN-1-P) to produce N-acetylglucosamine-1-phosphate (GlcNAc-1-P), which is converted into UDP-GlcNAc by the transfer of uridine 5-monophosphate (from uridine 5-triphosphate), a reaction catalyzed by the N-terminal domain. The polypeptide is Bifunctional protein GlmU (Clostridium botulinum (strain Langeland / NCTC 10281 / Type F)).